The chain runs to 453 residues: L-cysteine:1D-myo-inositol 2-amino-2-deoxy-alpha-D-glucopyranoside ligase (453 aa).

Residue Cys-58 coordinates Zn(2+). L-cysteinyl-5'-AMP-binding positions include 58–61, Thr-73, and 96–98; these read CGIT and NVT. The short motif at 60–70 is the 'HIGH' region element; that stretch reads ITPYDATHMGH. The 'ERGGDP' region signature appears at 221-226; the sequence is ERGGDP. An L-cysteinyl-5'-AMP-binding site is contributed by Trp-262. Cys-266 is a Zn(2+) binding site. L-cysteinyl-5'-AMP is bound at residue 284-286; it reads GND. Residue His-291 participates in Zn(2+) binding. Val-317 is an L-cysteinyl-5'-AMP binding site. The 'KMSKS' region signature appears at 323 to 327; sequence KMSKS.

This sequence belongs to the class-I aminoacyl-tRNA synthetase family. MshC subfamily. In terms of assembly, monomer. Zn(2+) is required as a cofactor.

It carries out the reaction 1D-myo-inositol 2-amino-2-deoxy-alpha-D-glucopyranoside + L-cysteine + ATP = 1D-myo-inositol 2-(L-cysteinylamino)-2-deoxy-alpha-D-glucopyranoside + AMP + diphosphate + H(+). Its function is as follows. Catalyzes the ATP-dependent condensation of GlcN-Ins and L-cysteine to form L-Cys-GlcN-Ins. The polypeptide is L-cysteine:1D-myo-inositol 2-amino-2-deoxy-alpha-D-glucopyranoside ligase (Rothia mucilaginosa (strain DY-18) (Stomatococcus mucilaginosus)).